The primary structure comprises 191 residues: Fe/S biogenesis protein NfuA (191 aa).

[4Fe-4S] cluster is bound by residues Cys149 and Cys152.

Belongs to the NfuA family. In terms of assembly, homodimer. It depends on [4Fe-4S] cluster as a cofactor.

Involved in iron-sulfur cluster biogenesis. Binds a 4Fe-4S cluster, can transfer this cluster to apoproteins, and thereby intervenes in the maturation of Fe/S proteins. Could also act as a scaffold/chaperone for damaged Fe/S proteins. The sequence is that of Fe/S biogenesis protein NfuA from Sodalis glossinidius (strain morsitans).